A 265-amino-acid chain; its full sequence is H-2 class II histocompatibility antigen, A beta chain (265 aa).

The N-terminal stretch at methionine 1–glycine 27 is a signal peptide. Residues glycine 28–leucine 122 are beta-1. Topologically, residues glycine 28–lysine 226 are extracellular. 2 disulfides stabilise this stretch: cysteine 42-cysteine 106 and cysteine 145-cysteine 201. Asparagine 46 carries N-linked (GlcNAc...) asparagine glycosylation. Residues glutamate 123–tryptophan 216 form a beta-2 region. One can recognise an Ig-like C1-type domain in the interval proline 125–threonine 213. The tract at residues arginine 217–lysine 226 is connecting peptide. The helical transmembrane segment at methionine 227–isoleucine 247 threads the bilayer. The Cytoplasmic segment spans residues arginine 248–glutamine 265.

This sequence belongs to the MHC class II family. Ubiquitinated in immature dendritic cells leading to down-regulation of MHC class II.

It localises to the membrane. The chain is H-2 class II histocompatibility antigen, A beta chain (H2-Ab1) from Mus musculus (Mouse).